Reading from the N-terminus, the 242-residue chain is 3-deoxy-manno-octulosonate cytidylyltransferase (242 aa).

The protein belongs to the KdsB family.

Its subcellular location is the cytoplasm. The enzyme catalyses 3-deoxy-alpha-D-manno-oct-2-ulosonate + CTP = CMP-3-deoxy-beta-D-manno-octulosonate + diphosphate. It participates in nucleotide-sugar biosynthesis; CMP-3-deoxy-D-manno-octulosonate biosynthesis; CMP-3-deoxy-D-manno-octulosonate from 3-deoxy-D-manno-octulosonate and CTP: step 1/1. The protein operates within bacterial outer membrane biogenesis; lipopolysaccharide biosynthesis. Its function is as follows. Activates KDO (a required 8-carbon sugar) for incorporation into bacterial lipopolysaccharide in Gram-negative bacteria. The protein is 3-deoxy-manno-octulosonate cytidylyltransferase of Anaeromyxobacter dehalogenans (strain 2CP-C).